Consider the following 352-residue polypeptide: Phenylalanine--tRNA ligase alpha subunit (352 aa).

A Mg(2+)-binding site is contributed by Glu258.

The protein belongs to the class-II aminoacyl-tRNA synthetase family. Phe-tRNA synthetase alpha subunit type 1 subfamily. In terms of assembly, tetramer of two alpha and two beta subunits. Mg(2+) is required as a cofactor.

It is found in the cytoplasm. It catalyses the reaction tRNA(Phe) + L-phenylalanine + ATP = L-phenylalanyl-tRNA(Phe) + AMP + diphosphate + H(+). In Staphylococcus haemolyticus (strain JCSC1435), this protein is Phenylalanine--tRNA ligase alpha subunit.